The chain runs to 154 residues: Oleosin 16.4 kDa (154 aa).

A2 carries the N-acetylalanine modification. The interval 2-33 (ADRDRSYRTFDQVVRGDRTNYQSGPSTTQVLT) is polar. A run of 3 helical transmembrane segments spans residues 31 to 51 (VLTVLTLLPIGGTLLALAGLT), 65 to 85 (LFVIFSPVLVPAAIAVFMAVA), and 86 to 106 (GFLSSGAFGLTGLSSLSYVFN). Positions 34–105 (VLTLLPIGGT…TGLSSLSYVF (72 aa)) are hydrophobic.

It belongs to the oleosin family.

It localises to the lipid droplet. The protein localises to the membrane. May have a structural role to stabilize the lipid body during desiccation of the seed by preventing coalescence of the oil. Probably interacts with both lipid and phospholipid moieties of lipid bodies. May also provide recognition signals for specific lipase anchorage in lipolysis during seedling growth. The polypeptide is Oleosin 16.4 kDa (MATP7) (Gossypium hirsutum (Upland cotton)).